The sequence spans 254 residues: Ribose-5-phosphate isomerase A (254 aa).

Substrate contacts are provided by residues 45-48, 105-108, and 118-121; these read TGST, DGAD, and KGGG. Residue Glu-127 is the Proton acceptor of the active site. Lys-145 is a substrate binding site.

The protein belongs to the ribose 5-phosphate isomerase family. Homodimer.

It catalyses the reaction aldehydo-D-ribose 5-phosphate = D-ribulose 5-phosphate. Its pathway is carbohydrate degradation; pentose phosphate pathway; D-ribose 5-phosphate from D-ribulose 5-phosphate (non-oxidative stage): step 1/1. Its function is as follows. Catalyzes the reversible conversion of ribose-5-phosphate to ribulose 5-phosphate. The chain is Ribose-5-phosphate isomerase A from Treponema pallidum subsp. pallidum (strain SS14).